Consider the following 544-residue polypeptide: Lipid II flippase MurJ (544 aa).

The next 14 helical transmembrane spans lie at 21 to 41, 49 to 69, 90 to 110, 127 to 147, 169 to 189, 191 to 211, 241 to 261, 297 to 317, 338 to 358, 375 to 395, 404 to 424, 431 to 451, 471 to 491, and 500 to 520; these read ILGMVYLIPFSIMVGATGGAL, YTLFLNIATMGFPAAVSKFVS, VMLVTGMIAFFILYLSAPMFA, VVYVIRMVSLALLVVPIMSLV, IVRIIFLLSATFLILKVFNGG, VIAVGYATFAALIGAFGGLVV, MFFELFSYAAPYVFVGLAIPL, LVMIPVSLATAFGLTLIPTIT, TILFLIIPAVVGISLLSGPTY, ILLWYSPVAILFSLFTVNAAI, FAVVSLVIGVVIKLVLNVPLI, GAILATALGYIASLLYGFIMI, VLSAIMGIAVKIVQWVLGFFI, and AAIVVVIAAAVGGAVYLYCGY.

Belongs to the polysaccharide synthase family.

The protein resides in the cell membrane. It functions in the pathway cell wall biogenesis; peptidoglycan biosynthesis. Involved in peptidoglycan biosynthesis. Transports lipid-linked peptidoglycan precursors from the inner to the outer leaflet of the cytoplasmic membrane. Not essential for growth. This Bacillus subtilis (strain 168) protein is Lipid II flippase MurJ.